We begin with the raw amino-acid sequence, 274 residues long: Small ribosomal subunit protein uS2 (274 aa).

Belongs to the universal ribosomal protein uS2 family.

The sequence is that of Small ribosomal subunit protein uS2 from Syntrophobacter fumaroxidans (strain DSM 10017 / MPOB).